A 379-amino-acid polypeptide reads, in one-letter code: Chaperone protein DnaJ (379 aa).

One can recognise a J domain in the interval 7–72 (DYYEVLGVDK…KKRSMYDQFG (66 aa)). Residues 147-225 (GKKAELSYTR…CGGNGLERKK (79 aa)) form a CR-type zinc finger. Positions 160, 163, 177, 180, 199, 202, 213, and 216 each coordinate Zn(2+). CXXCXGXG motif repeat units lie at residues 160-167 (CSECHGTG), 177-184 (CPDCKGTG), 199-206 (CPTCGGEG), and 213-220 (CKKCGGNG).

Belongs to the DnaJ family. As to quaternary structure, homodimer. Zn(2+) is required as a cofactor.

The protein resides in the cytoplasm. Its function is as follows. Participates actively in the response to hyperosmotic and heat shock by preventing the aggregation of stress-denatured proteins and by disaggregating proteins, also in an autonomous, DnaK-independent fashion. Unfolded proteins bind initially to DnaJ; upon interaction with the DnaJ-bound protein, DnaK hydrolyzes its bound ATP, resulting in the formation of a stable complex. GrpE releases ADP from DnaK; ATP binding to DnaK triggers the release of the substrate protein, thus completing the reaction cycle. Several rounds of ATP-dependent interactions between DnaJ, DnaK and GrpE are required for fully efficient folding. Also involved, together with DnaK and GrpE, in the DNA replication of plasmids through activation of initiation proteins. The chain is Chaperone protein DnaJ from Treponema denticola (strain ATCC 35405 / DSM 14222 / CIP 103919 / JCM 8153 / KCTC 15104).